The sequence spans 508 residues: MMITIRPDEISSIIREQIEQYNNEIQVVNMGTVLQVGDGIARIHGLYEVMAGELVEFEDSTVGIALNLETQNVGVVLMGDGLTIKEGSFVKTTGKIAQIPVSDAFLGRIVNALAQPIDGRGPIPASEFRLIESPAPGIVSRRSVYEPLQTGLIAIDSMIPIGRGQRELIIGDRQTGKTAVATDTILNQKGQNVVCVYVAIGQKASSVAQVVNMLRERSAMEYTIVVVEPADSPATLQYLAPYTGTALAEYFMYKKKHTLIIYDDLSKQAQAYRQMSLLLRRPPGREAYPGDVFYLHSRLLERAAKLNSQLGEGSITALPIVETQAGDVSAYIPTNVISITDGQIFLSSDLFNAGIRPAINVGLSVSRVGSAAQIKAMKQVAGKLKLELAQTAELEAFAQFASDLDKGTQDQLARGQRLRESLKQPQSTPLTVEEQIATIFTGTNGYLDRFDIREVKKFLDQLREYLKKKKPQFGEIIRTTKIFTEEAEALLREAIKEQTELFVVQQKN.

171–178 (GDRQTGKT) is an ATP binding site.

It belongs to the ATPase alpha/beta chains family. In terms of assembly, F-type ATPases have 2 components, CF(1) - the catalytic core - and CF(0) - the membrane proton channel. CF(1) has five subunits: alpha(3), beta(3), gamma(1), delta(1), epsilon(1). CF(0) has four main subunits: a, b, b' and c.

It localises to the plastid. The protein localises to the chloroplast thylakoid membrane. It carries out the reaction ATP + H2O + 4 H(+)(in) = ADP + phosphate + 5 H(+)(out). In terms of biological role, produces ATP from ADP in the presence of a proton gradient across the membrane. The alpha chain is a regulatory subunit. The sequence is that of ATP synthase subunit alpha, chloroplastic from Gnetum parvifolium (Small-leaved jointfir).